Consider the following 445-residue polypeptide: POU domain, class 5, transcription factor 1.2 (445 aa).

Composition is skewed to polar residues over residues 76 to 88 (SANQLGISGQGNP) and 164 to 182 (IFTSSPDKSGESGISSLDN). Disordered stretches follow at residues 76-116 (SANQ…PSLP) and 139-227 (TTVV…GEME). Residues 183–200 (SRCSSATSSSSGGTNVGT) are compositionally biased toward low complexity. Residues 218–292 (EEAPNSGEME…LLRSWLHEVE (75 aa)) form the POU-specific domain. Positions 312–371 (KRKHRTSIENNVKCTLENYFMQCSKPSAQEIAQIARELNMEKDVVRVWFCNRRQKGKRQV) form a DNA-binding region, homeobox.

This sequence belongs to the POU transcription factor family. Class-5 subfamily. Interacts with the transcription factors tcf7l1/tcf3 and vegt. As to expression, initially (stage 9) expressed in all regions of the embryo, becoming localized to the ventroposterior regions by early neurula stages. In adults, expressed at a low level in the brain.

Its subcellular location is the nucleus. In terms of biological role, transcription factor that binds to the octamer motif (5'-ATTTGCAT-3'). Antagonizes the activity of nodal/activin signaling during gastrulation to suppress mesendoderm formation. In Xenopus laevis (African clawed frog), this protein is POU domain, class 5, transcription factor 1.2 (pou5f1.2).